Here is an 827-residue protein sequence, read N- to C-terminus: Lon protease (827 aa).

Residues 38 to 233 (LTLLASKYNV…VLLKYLLKDL (196 aa)) form the Lon N-terminal domain. Position 384-391 (384-391 (GPPGVGKT)) interacts with ATP. A Lon proteolytic domain is found at 619 to 800 (THLPGVAIGL…EEVIQLALQP (182 aa)). Catalysis depends on residues serine 706 and lysine 749.

This sequence belongs to the peptidase S16 family. As to quaternary structure, homohexamer. Organized in a ring with a central cavity.

The protein localises to the cytoplasm. It carries out the reaction Hydrolysis of proteins in presence of ATP.. Functionally, ATP-dependent serine protease that mediates the selective degradation of mutant and abnormal proteins as well as certain short-lived regulatory proteins. Required for cellular homeostasis and for survival from DNA damage and developmental changes induced by stress. Degrades polypeptides processively to yield small peptide fragments that are 5 to 10 amino acids long. Binds to DNA in a double-stranded, site-specific manner. This chain is Lon protease, found in Amoebophilus asiaticus (strain 5a2).